Reading from the N-terminus, the 224-residue chain is uncharacterized protein (224 aa).

Residues 2-221 (IEAKNVWKIY…KLRDGEIVEI (220 aa)) form the ABC transporter domain. 38–45 (GPSGCGKS) lines the ATP pocket.

Belongs to the ABC transporter superfamily.

This is an uncharacterized protein from Methanocaldococcus jannaschii (strain ATCC 43067 / DSM 2661 / JAL-1 / JCM 10045 / NBRC 100440) (Methanococcus jannaschii).